A 340-amino-acid chain; its full sequence is Holliday junction branch migration complex subunit RuvB (340 aa).

The tract at residues M1–Y182 is large ATPase domain (RuvB-L). ATP contacts are provided by residues L21, R22, G63, K66, T67, T68, E129–F131, R172, Y182, and R219. Residue T67 coordinates Mg(2+). Residues T183 to G253 form a small ATPAse domain (RuvB-S) region. A head domain (RuvB-H) region spans residues H256–G340. Residues R292, R311, and R316 each contribute to the DNA site.

Belongs to the RuvB family. As to quaternary structure, homohexamer. Forms an RuvA(8)-RuvB(12)-Holliday junction (HJ) complex. HJ DNA is sandwiched between 2 RuvA tetramers; dsDNA enters through RuvA and exits via RuvB. An RuvB hexamer assembles on each DNA strand where it exits the tetramer. Each RuvB hexamer is contacted by two RuvA subunits (via domain III) on 2 adjacent RuvB subunits; this complex drives branch migration. In the full resolvosome a probable DNA-RuvA(4)-RuvB(12)-RuvC(2) complex forms which resolves the HJ.

Its subcellular location is the cytoplasm. It carries out the reaction ATP + H2O = ADP + phosphate + H(+). In terms of biological role, the RuvA-RuvB-RuvC complex processes Holliday junction (HJ) DNA during genetic recombination and DNA repair, while the RuvA-RuvB complex plays an important role in the rescue of blocked DNA replication forks via replication fork reversal (RFR). RuvA specifically binds to HJ cruciform DNA, conferring on it an open structure. The RuvB hexamer acts as an ATP-dependent pump, pulling dsDNA into and through the RuvAB complex. RuvB forms 2 homohexamers on either side of HJ DNA bound by 1 or 2 RuvA tetramers; 4 subunits per hexamer contact DNA at a time. Coordinated motions by a converter formed by DNA-disengaged RuvB subunits stimulates ATP hydrolysis and nucleotide exchange. Immobilization of the converter enables RuvB to convert the ATP-contained energy into a lever motion, pulling 2 nucleotides of DNA out of the RuvA tetramer per ATP hydrolyzed, thus driving DNA branch migration. The RuvB motors rotate together with the DNA substrate, which together with the progressing nucleotide cycle form the mechanistic basis for DNA recombination by continuous HJ branch migration. Branch migration allows RuvC to scan DNA until it finds its consensus sequence, where it cleaves and resolves cruciform DNA. In Roseobacter denitrificans (strain ATCC 33942 / OCh 114) (Erythrobacter sp. (strain OCh 114)), this protein is Holliday junction branch migration complex subunit RuvB.